We begin with the raw amino-acid sequence, 115 residues long: UPF0738 protein SE_0694 (115 aa).

It belongs to the UPF0738 family.

This is UPF0738 protein SE_0694 from Staphylococcus epidermidis (strain ATCC 12228 / FDA PCI 1200).